Consider the following 726-residue polypeptide: A-type inclusion protein A25 homolog (726 aa).

Positions T342–I361 are disordered. Over residues E347–P360 the composition is skewed to basic and acidic residues. The interval T426–N713 is 4 X approximate tandem repeats. Tandem repeats lie at residues R612–N634, Q639–S661, T667–N689, and T691–N713.

The protein belongs to the poxviridae A25 protein family. As to quaternary structure, interacts (via N-terminus) with protein A26.

It is found in the virion. Structural protein that forms a matrix surrounding the mature virion (MV) through interaction with protein A26. Presence of protein A25 in the virion structurally prevents direct virus-cell fusion mechanism. This chain is A-type inclusion protein A25 homolog, found in Camelus.